A 460-amino-acid chain; its full sequence is Argininosuccinate lyase (460 aa).

It belongs to the lyase 1 family. Argininosuccinate lyase subfamily.

The protein localises to the cytoplasm. The catalysed reaction is 2-(N(omega)-L-arginino)succinate = fumarate + L-arginine. It participates in amino-acid biosynthesis; L-arginine biosynthesis; L-arginine from L-ornithine and carbamoyl phosphate: step 3/3. The protein is Argininosuccinate lyase of Rhodopirellula baltica (strain DSM 10527 / NCIMB 13988 / SH1).